We begin with the raw amino-acid sequence, 429 residues long: Gap junction gamma-2 protein (429 aa).

The Cytoplasmic portion of the chain corresponds to 1–25; that stretch reads MTNMSWSFLTRLLEEIHNHSTFVGK. Residues 26–46 traverse the membrane as a helical segment; it reads VWLTVLVVFRIVLTAVGGESI. Residues 47–78 are Extracellular-facing; the sequence is YSDEQTKFTCNTRQPGCDNVCYDAFAPLSHVR. The chain crosses the membrane as a helical span at residues 79 to 99; that stretch reads FWVFQIVVISTPSVMYLGYAV. The Cytoplasmic segment spans residues 100–214; sequence HRLARASQDE…EGLMRVYVAQ (115 aa). Residues 106–200 form a disordered region; it reads SQDERRRASR…GPAGQHDGRR (95 aa). Basic residues predominate over residues 112–123; that stretch reads RASRRRPSRRAP. Positions 124–138 are enriched in pro residues; the sequence is RPPLPLPPPPHPGWP. Positions 142–173 are enriched in acidic residues; sequence DLGEEEPMLGLGEEDEDPGVAEGLGEDEEAED. A helical membrane pass occupies residues 215–235; it reads LVARAAFEVAFLVGQYLLYGF. Over 236–263 the chain is Extracellular; it reads EVRPFFACSRQPCPHVVDCFVSRPTEKT. A helical membrane pass occupies residues 264–284; it reads VFLLVMYVVSCLCLLLNLCEM. Residues 285–429 are Cytoplasmic-facing; that stretch reads AHLGLGNAQD…SREGKTTVWI (145 aa). 2 disordered regions span residues 296–316 and 361–429; these read VRGR…PPCA and LGDL…TVWI. The segment covering 303–316 has biased composition (pro residues); that stretch reads PASPGPMPRPPPCA. Ser366 carries the phosphoserine modification. Residues 372–395 are compositionally biased toward low complexity; sequence LPANARGPPKPGAPASGSGSATSG.

This sequence belongs to the connexin family. Gamma-type subfamily. In terms of assembly, a connexon is composed of a hexamer of connexins. Interacts with TJP1.

The protein resides in the cell membrane. It localises to the cell junction. Its subcellular location is the gap junction. Its function is as follows. One gap junction consists of a cluster of closely packed pairs of transmembrane channels, the connexons, through which materials of low MW diffuse from one cell to a neighboring cell. May play a role in myelination in central and peripheral nervous systems. This Bos taurus (Bovine) protein is Gap junction gamma-2 protein (GJC2).